Consider the following 320-residue polypeptide: Polyprenyl transferase pyr6 (320 aa).

Transmembrane regions (helical) follow at residues 22–42, 60–80, 101–121, 127–147, 155–175, and 186–206; these read KYNC…AAAS, GLAF…NDWI, LATR…VWLM, GQNL…YPFG, LGIY…LPAW, and PDLL…TIYF. An N-linked (GlcNAc...) asparagine glycan is attached at Asn224. Residues 233 to 253 form a helical membrane-spanning segment; it reads YVHGLLLLQAVAVVMVIPWIL. A glycan (N-linked (GlcNAc...) asparagine) is linked at Asn256. Helical transmembrane passes span 260–280 and 296–316; these read WLWF…LYLF and FALG…VSGS.

Belongs to the UbiA prenyltransferase family. It depends on Mg(2+) as a cofactor.

The protein resides in the membrane. The enzyme catalyses 4-hydroxy-6-(pyridin-3-yl)-2H-pyran-2-one + (2E,6E)-farnesyl diphosphate = 4-hydroxy-3-[(2E,6E)-farnesyl]-6-(pyridin-3-yl)-2H-pyran-2-one + diphosphate. It participates in secondary metabolite biosynthesis; terpenoid biosynthesis. Polyprenyl transferase; part of the gene cluster that mediates the biosynthesis of pyripyropene A, a specific human acyl-coenzyme A:cholesterol acyltransferase 2 inhibitor. The first step of the pathway is the synthesis of nicotinyl-CoA from nicotinic acid by the nicotinic acid-CoA ligase pyr1. Nicotinyl-CoA is then a substrate of polyketide synthase pyr2 to produce 4-hydroxy-6-(3-pyridinyl)-2H-pyran-2-one (HPPO) which is further prenylated by the polyprenyl transferase pyr6 to yield farnesyl-HPPO. The next steps consist of an epoxidation of farnesyl-HPPO to epoxyfarnesyl-HPPO by FAD-dependent monooxygenase pyr5 and a cyclization of the terpenoid portion by the terpene cyclase pyr4 to yield deacetyl-pyripyropene E. The 2 cytochrome P450 monooxygenases pyr3 and pyr9, and the 2 acetyltransferases pyr7 and pyr8 are involved in the conversion of deacetyl-pyripyropene E into pyripyropene A through several cycles of oxidation and acetylation steps. Pyr7 acetylates deacetyl-pyripyropene E to pyripyropene E which is oxidized to 11-deacetyl-pyripyropene O by pyr3, which is in turn acetylated into pyripyropene O by pyr8. Pyripyropene O is then oxidized to deacetyl-pyripyropene A by pyr9. Deacetyl-pyripyropene A is finally acetylated to pyripyropene A by pyr8. The polypeptide is Polyprenyl transferase pyr6 (Aspergillus fumigatus (strain ATCC MYA-4609 / CBS 101355 / FGSC A1100 / Af293) (Neosartorya fumigata)).